The primary structure comprises 504 residues: L-amino-acid oxidase (504 aa).

Residues 1 to 18 (MNVFFMFSLLFLAALGSC) form the signal peptide. Cysteine 28 and cysteine 191 are disulfide-bonded. FAD-binding positions include 61–62 (MS), 81–82 (EA), arginine 89, and 105–108 (GPMR). Substrate is bound at residue arginine 108. Asparagine 190 carries N-linked (GlcNAc...) asparagine glycosylation. Histidine 241 contacts substrate. Residue valine 279 participates in FAD binding. An intrachain disulfide couples cysteine 349 to cysteine 430. Asparagine 379 is a glycosylation site (N-linked (GlcNAc...) asparagine). A substrate-binding site is contributed by tyrosine 390. Residues glutamate 475 and 482–487 (GWIDST) each bind FAD. A substrate-binding site is contributed by 482–483 (GW).

The protein belongs to the flavin monoamine oxidase family. FIG1 subfamily. Homodimer; non-covalently linked. FAD is required as a cofactor. Expressed by the venom gland.

The protein localises to the secreted. The catalysed reaction is an L-alpha-amino acid + O2 + H2O = a 2-oxocarboxylate + H2O2 + NH4(+). The enzyme catalyses L-leucine + O2 + H2O = 4-methyl-2-oxopentanoate + H2O2 + NH4(+). In terms of biological role, catalyzes an oxidative deamination of predominantly hydrophobic and aromatic L-amino acids, thus producing hydrogen peroxide that may contribute to the diverse toxic effects of this enzyme. Shows activity on L-Leu. Exhibits diverse biological activities, such as apoptosis, and inhibition of agonist- and shear stress-induced platelet aggregation (SIPA). Effects of snake L-amino oxidases on platelets are controversial, since they either induce aggregation or inhibit agonist-induced aggregation. These different effects are probably due to different experimental conditions. This protein may also induce hemorrhage, hemolysis, edema, antibacterial and antiparasitic activities. This is L-amino-acid oxidase from Gloydius blomhoffii (Mamushi).